We begin with the raw amino-acid sequence, 486 residues long: Ribulose bisphosphate carboxylase large chain (486 aa).

Asn-125 and Thr-175 together coordinate substrate. The active-site Proton acceptor is the Lys-177. Lys-179 contacts substrate. Residues Lys-203, Asp-205, and Glu-206 each contribute to the Mg(2+) site. Lys-203 is subject to N6-carboxylysine. Catalysis depends on His-295, which acts as the Proton acceptor. Residues Arg-296, His-328, and Ser-380 each coordinate substrate.

It belongs to the RuBisCO large chain family. Type I subfamily. Heterohexadecamer of 8 large chains and 8 small chains. The cofactor is Mg(2+).

It catalyses the reaction 2 (2R)-3-phosphoglycerate + 2 H(+) = D-ribulose 1,5-bisphosphate + CO2 + H2O. The catalysed reaction is D-ribulose 1,5-bisphosphate + O2 = 2-phosphoglycolate + (2R)-3-phosphoglycerate + 2 H(+). Functionally, ruBisCO catalyzes two reactions: the carboxylation of D-ribulose 1,5-bisphosphate, the primary event in carbon dioxide fixation, as well as the oxidative fragmentation of the pentose substrate. Both reactions occur simultaneously and in competition at the same active site. This Bradyrhizobium diazoefficiens (strain JCM 10833 / BCRC 13528 / IAM 13628 / NBRC 14792 / USDA 110) protein is Ribulose bisphosphate carboxylase large chain.